The primary structure comprises 165 residues: MYIEMIDETGQVSQEIMEQTLDLLNFAAQKTGKEEKEMSVTFVTNERSHELNLEYRDTDRPTDVISLEYKPETPILFSQEDFAADPSLAEMMAEFDAYIGELFISIDKAREQSQEYGHSFEREMGFLAVHGFLHINGYDHYTLEEEKEMFTLQEEILTAYGLTRQ.

Zn(2+)-binding residues include His130, His134, and His140.

The protein belongs to the endoribonuclease YbeY family. The cofactor is Zn(2+).

It localises to the cytoplasm. In terms of biological role, single strand-specific metallo-endoribonuclease involved in late-stage 70S ribosome quality control and in maturation of the 3' terminus of the 16S rRNA. In Streptococcus pyogenes serotype M28 (strain MGAS6180), this protein is Endoribonuclease YbeY.